An 886-amino-acid polypeptide reads, in one-letter code: MKIIKSLILLVLFMASPAKGDDFAWMSSGLSGLKSIFGCLEVPTFTSFQEGKIGISLSTAGDWQSTGNAVEKGKLLKIKWSTAGLTPEPRKYLVLYRIDPRFSVPQVFIKTYNYKNSQFEVAGFPGFSTANDGVIPPDKNLDALSFTKMNNYVNYFNYANGNPKIQVNVGDIVNISLADKDDFFNPSTSKTPSTLNNILAKELDSSVFAASALYTESNLGNFENRIVYSSAEQVCNIIDAQRATLCTGTGSATKYTNVSNGALVGKPMAVTTLQNFMSMINSCPANSNLNANPSCYYDQGRGMVIKIGGQVIKNRDQSFVNNDNTQNGFMYYQATSGGAMDFSSDWQPTGMFNNSFSMSDWSRNFSNYTDFATYITNGNWATNFLYFGRYAMIVEIGNGTNTISPGDQKNITLEYLITADGTLPSSSTPGTTVGYDFSGDAPQDGYLWLRVKNPNSNIQGTISVDYANYTGTTWFSNIVYNGAIKPITDQFRTYSEDFYFKLVANSAIQNIAKTALTLYVTIFGLMFVLGALKLTAVEVVTRIFKITIVAILLRPESWSFFNNNFFSAFINGIDFFATNVVGATSSKSNIFGFIDPIFDKYTNGRIWGLLFIQLLQIHNGLAFIVIITIYSLITYFRAVLEVIIGYVIAFIGLTVMISLAPFFIILMLFEKTKTMFNNWISILFSYVVQPTILLIFFLLIDQILSEQLLKVIVRACWDTLIPIKIGLDLSNLGIPLNFSFTLPFLPGIPFFVPQVPDITSSNILTNDTNTFLVLFTTALLFYSYCLMSYGLVSFVTIVVGMLTQVTPARIEGNYQAPSNPTESIMKDIGSVAAPIKKAALAPARIFKDKVIDQNYEARKPQGGGEHTGKFFQNRNDVKPEQTERND.

Residues 1 to 20 (MKIIKSLILLVLFMASPAKG) form the signal peptide. The next 5 membrane-spanning stretches (helical) occupy residues 520–540 (VTIF…VEVV), 609–629 (LLFI…IITI), 647–667 (VIAF…IILM), 680–700 (ISIL…FLLI), and 779–799 (LLFY…TIVV). A disordered region spans residues 856–886 (EARKPQGGGEHTGKFFQNRNDVKPEQTERND). Over residues 875 to 886 (NDVKPEQTERND) the composition is skewed to basic and acidic residues.

It belongs to the TrbL/VirB6 family.

It is found in the cell membrane. This is an uncharacterized protein from Rickettsia bellii (strain RML369-C).